The following is a 453-amino-acid chain: Na(+)/H(+) antiporter NhaA 2 (453 aa).

The next 12 helical transmembrane spans lie at 23 to 43, 74 to 94, 111 to 131, 139 to 159, 168 to 188, 191 to 211, 214 to 234, 235 to 255, 316 to 336, 345 to 365, 386 to 406, and 419 to 439; these read FLHIEAVSGIVLLIAAVAALI, LHFWINDGLMTIFFLVVGMEI, LPMAAAVGGVAVPALLYLSFG, GWAVPTATDIAFAVGVLALLG, VFLLALAIIDDIIAVLIIAFF, GGLDYTGFGVAVIGLLMVIGL, IGVGSAYAYVIPGAIVWLGIL, LTGAHPTLAGVVLGLMTPVTA, VAFGIMPVFALANAGVSLSGV, WVMIAVAVALVAGKPLGIVSV, IMLVGLLAGIGFTMSIFIANL, and LGVLSASLIAAVLGLTWGVWS.

It belongs to the NhaA Na(+)/H(+) (TC 2.A.33) antiporter family.

It localises to the cell inner membrane. It carries out the reaction Na(+)(in) + 2 H(+)(out) = Na(+)(out) + 2 H(+)(in). Functionally, na(+)/H(+) antiporter that extrudes sodium in exchange for external protons. The polypeptide is Na(+)/H(+) antiporter NhaA 2 (Pseudomonas putida (strain ATCC 47054 / DSM 6125 / CFBP 8728 / NCIMB 11950 / KT2440)).